A 547-amino-acid polypeptide reads, in one-letter code: Chaperonin GroEL (547 aa).

ATP is bound by residues 30–33, lysine 51, 87–91, glycine 415, 479–481, and aspartate 495; these read TLGP, DGTTT, and NAA. Residues 524 to 547 are disordered; sequence APKKDEPTPPAAGGGMGGMGGMDF. Positions 535-547 are enriched in gly residues; that stretch reads AGGGMGGMGGMDF.

It belongs to the chaperonin (HSP60) family. Forms a cylinder of 14 subunits composed of two heptameric rings stacked back-to-back. Interacts with the co-chaperonin GroES.

The protein resides in the cytoplasm. The enzyme catalyses ATP + H2O + a folded polypeptide = ADP + phosphate + an unfolded polypeptide.. Together with its co-chaperonin GroES, plays an essential role in assisting protein folding. The GroEL-GroES system forms a nano-cage that allows encapsulation of the non-native substrate proteins and provides a physical environment optimized to promote and accelerate protein folding. In Xylella fastidiosa (strain M23), this protein is Chaperonin GroEL.